The following is a 390-amino-acid chain: Tryptophan synthase beta chain (390 aa).

N6-(pyridoxal phosphate)lysine is present on Lys90.

The protein belongs to the TrpB family. As to quaternary structure, tetramer of two alpha and two beta chains. Pyridoxal 5'-phosphate serves as cofactor.

The enzyme catalyses (1S,2R)-1-C-(indol-3-yl)glycerol 3-phosphate + L-serine = D-glyceraldehyde 3-phosphate + L-tryptophan + H2O. It participates in amino-acid biosynthesis; L-tryptophan biosynthesis; L-tryptophan from chorismate: step 5/5. In terms of biological role, the beta subunit is responsible for the synthesis of L-tryptophan from indole and L-serine. This Bacteroides fragilis (strain ATCC 25285 / DSM 2151 / CCUG 4856 / JCM 11019 / LMG 10263 / NCTC 9343 / Onslow / VPI 2553 / EN-2) protein is Tryptophan synthase beta chain.